A 280-amino-acid chain; its full sequence is MAFGLIGRVVGTKSSRLSTAARLIPARWTSTGSEAQSKASTGGGGASLKTFQIYRWNPDNPGKPELQDYKIDLKDCGPMVLDALIKIKNEMDPSLTFRRSCREGICGSCAMNIDGCNGLACLTKIESGSKETTITPLPHMFVIKDLVVDMTNFYNQYKSIEPWLKRKNPASVPGKEILQSKKDRAKLDGMYECILCACCSTSCPSYWWNPESYLGPAALLHANRWISDSRDEYTKERLEAIDDEFKLYRCHTILNCARACPKGLNPGKQITHIKQLQKSG.

Residues 1–28 constitute a mitochondrion transit peptide; the sequence is MAFGLIGRVVGTKSSRLSTAARLIPARW. Positions 51-140 constitute a 2Fe-2S ferredoxin-type domain; sequence FQIYRWNPDN…ETTITPLPHM (90 aa). Residues Cys-101, Cys-106, and Cys-121 each coordinate [2Fe-2S] cluster. The 31-residue stretch at 183–213 folds into the 4Fe-4S ferredoxin-type domain; the sequence is DRAKLDGMYECILCACCSTSCPSYWWNPESY. Residues Cys-193, Cys-196, and Cys-199 each contribute to the [4Fe-4S] cluster site. Residue Cys-203 participates in [3Fe-4S] cluster binding. Trp-208 lines the a ubiquinone pocket. Residues Cys-250 and Cys-256 each contribute to the [3Fe-4S] cluster site. Cys-260 contributes to the [4Fe-4S] cluster binding site.

Belongs to the succinate dehydrogenase/fumarate reductase iron-sulfur protein family. Component of complex II composed of eight subunits in plants: four classical SDH subunits SDH1, SDH2, SDH3 and SDH4 (a flavoprotein (FP), an iron-sulfur protein (IP), and a cytochrome b composed of a large and a small subunit.), as well as four subunits unknown in mitochondria from bacteria and heterotrophic eukaryotes. The cofactor is [2Fe-2S] cluster. [3Fe-4S] cluster serves as cofactor. Requires [4Fe-4S] cluster as cofactor. As to expression, ubiquitous. Preferentially expressed in flowers, inflorescences and root tips.

It localises to the mitochondrion inner membrane. The catalysed reaction is a quinone + succinate = fumarate + a quinol. It participates in carbohydrate metabolism; tricarboxylic acid cycle; fumarate from succinate (eukaryal route): step 1/1. Functionally, iron-sulfur protein (IP) subunit of succinate dehydrogenase (SDH) that is involved in complex II of the mitochondrial electron transport chain and is responsible for transferring electrons from succinate to ubiquinone (coenzyme Q). The protein is Succinate dehydrogenase [ubiquinone] iron-sulfur subunit 2, mitochondrial (SDH2-2) of Arabidopsis thaliana (Mouse-ear cress).